The primary structure comprises 40 residues: Large ribosomal subunit protein bL36 (40 aa).

This sequence belongs to the bacterial ribosomal protein bL36 family.

This chain is Large ribosomal subunit protein bL36, found in Corynebacterium aurimucosum (strain ATCC 700975 / DSM 44827 / CIP 107346 / CN-1) (Corynebacterium nigricans).